A 101-amino-acid chain; its full sequence is NADH-ubiquinone oxidoreductase chain 5 (101 aa).

3 helical membrane passes run 12–32 (IALFTVFIIDIIKFYILSGVI), 48–68 (FLFITMGFLFFIFTTWYFICF), and 79–99 (LVIYFRYNLKYCLFFCMLFII).

The protein belongs to the complex I subunit 5 family.

The protein localises to the mitochondrion inner membrane. It carries out the reaction a ubiquinone + NADH + 5 H(+)(in) = a ubiquinol + NAD(+) + 4 H(+)(out). Its function is as follows. Core subunit of the mitochondrial membrane respiratory chain NADH dehydrogenase (Complex I) that is believed to belong to the minimal assembly required for catalysis. Complex I functions in the transfer of electrons from NADH to the respiratory chain. The immediate electron acceptor for the enzyme is believed to be ubiquinone. The protein is NADH-ubiquinone oxidoreductase chain 5 (ND5) of Leishmania tarentolae (Sauroleishmania tarentolae).